The chain runs to 237 residues: E3 ubiquitin-protein ligase RNF166 (237 aa).

An RING-type zinc finger spans residues 33 to 73 (CPICLEVYHRPVAIGSCGHTFCGECLQPCLQVPSPLCPLCR). Zn(2+) contacts are provided by Cys98, Cys101, His113, and Cys117. The C2HC RNF-type zinc finger occupies 98–117 (CRGCNKKVTLAKMRAHISSC). Positions 221-237 (DEEAAFQAALALSLSEN) constitute a UIM domain.

It localises to the cytoplasm. The enzyme catalyses S-ubiquitinyl-[E2 ubiquitin-conjugating enzyme]-L-cysteine + [acceptor protein]-L-lysine = [E2 ubiquitin-conjugating enzyme]-L-cysteine + N(6)-ubiquitinyl-[acceptor protein]-L-lysine.. It participates in protein modification; protein ubiquitination. Functionally, E3 ubiquitin-protein ligase that promotes the ubiquitination of different substrates. In turn, participates in different biological processes including interferon production or autophagy. Plays a role in the activation of RNA virus-induced interferon-beta production by promoting the ubiquitination of TRAF3 and TRAF6. Also plays a role in the early recruitment of autophagy adapters to bacteria. Mediates 'Lys-29' and 'Lys-33'-linked ubiquitination of SQSTM1 leading to xenophagic targeting of bacteria and inhibition of their replication. This chain is E3 ubiquitin-protein ligase RNF166 (Rnf166), found in Mus musculus (Mouse).